A 215-amino-acid chain; its full sequence is Oligoribonuclease (215 aa).

The region spanning 5–170 is the Exonuclease domain; that stretch reads LVWIDCEMTG…ADIHESIREL (166 aa). The active site involves Tyr-127.

The protein belongs to the oligoribonuclease family.

The protein resides in the cytoplasm. In terms of biological role, 3'-to-5' exoribonuclease specific for small oligoribonucleotides. The sequence is that of Oligoribonuclease from Mycobacterium leprae (strain TN).